The following is a 61-amino-acid chain: Large ribosomal subunit protein bL32 (61 aa).

Residues 1 to 16 (MAVPRRKTSPSRRGMR) are compositionally biased toward basic residues. Residues 1 to 61 (MAVPRRKTSP…RQVLKVKKED (61 aa)) are disordered. Positions 17 to 44 (RSADALKKPTYVEDKDSGELRRPHHLDL) are enriched in basic and acidic residues.

It belongs to the bacterial ribosomal protein bL32 family.

This chain is Large ribosomal subunit protein bL32, found in Afipia carboxidovorans (strain ATCC 49405 / DSM 1227 / KCTC 32145 / OM5) (Oligotropha carboxidovorans).